The sequence spans 235 residues: Small ribosomal subunit protein uS2c (235 aa).

Belongs to the universal ribosomal protein uS2 family.

It is found in the plastid. Its subcellular location is the chloroplast. The polypeptide is Small ribosomal subunit protein uS2c (rps2) (Marchantia polymorpha (Common liverwort)).